The sequence spans 146 residues: 3-dehydroquinate dehydratase (146 aa).

Y24 serves as the catalytic Proton acceptor. Substrate contacts are provided by N73, H79, and D86. H99 serves as the catalytic Proton donor. Substrate-binding positions include L100–S101 and R110.

It belongs to the type-II 3-dehydroquinase family. In terms of assembly, homododecamer.

It carries out the reaction 3-dehydroquinate = 3-dehydroshikimate + H2O. Its pathway is metabolic intermediate biosynthesis; chorismate biosynthesis; chorismate from D-erythrose 4-phosphate and phosphoenolpyruvate: step 3/7. Its function is as follows. Catalyzes a trans-dehydration via an enolate intermediate. In Shewanella baltica (strain OS195), this protein is 3-dehydroquinate dehydratase.